A 186-amino-acid polypeptide reads, in one-letter code: Elongation factor P (186 aa).

This sequence belongs to the elongation factor P family.

Its subcellular location is the cytoplasm. It functions in the pathway protein biosynthesis; polypeptide chain elongation. In terms of biological role, involved in peptide bond synthesis. Stimulates efficient translation and peptide-bond synthesis on native or reconstituted 70S ribosomes in vitro. Probably functions indirectly by altering the affinity of the ribosome for aminoacyl-tRNA, thus increasing their reactivity as acceptors for peptidyl transferase. In Coprothermobacter proteolyticus (strain ATCC 35245 / DSM 5265 / OCM 4 / BT), this protein is Elongation factor P.